The sequence spans 541 residues: Phosphatidylethanolamine transferase Mcr-1 (541 aa).

Over 1-14 the chain is Cytoplasmic; it reads MMQHTSVWYRRSVS. The helical transmembrane segment at 15–35 threads the bilayer; that stretch reads PFVLVASVAVFLTATANLTFF. Residues 36-47 lie on the Periplasmic side of the membrane; that stretch reads DKISQTYPIADN. Residues 48–68 form a helical membrane-spanning segment; it reads LGFVLTIAVVLFGAMLLITTL. Topologically, residues 69–73 are cytoplasmic; the sequence is LSSYR. The helical transmembrane segment at 74 to 94 threads the bilayer; the sequence is YVLKPVLILLLIMGAVTSYFT. At 95–122 the chain is on the periplasmic side; the sequence is DTYGTVYDTTMLQNALQTDQAETKDLLN. A helical membrane pass occupies residues 123-143; sequence AAFIMRIIGLGVLPSLLVAFV. At 144 to 157 the chain is on the cytoplasmic side; the sequence is KVDYPTWGKGLMRR. The helical transmembrane segment at 158–178 threads the bilayer; sequence LGLIVASLALILLPVVAFSSH. Topologically, residues 179 to 541 are periplasmic; it reads YASFFRVHKP…KVKDRTAFIR (363 aa). The Zn(2+) site is built by glutamate 246 and threonine 285. 3 disulfides stabilise this stretch: cysteine 281–cysteine 291, cysteine 356–cysteine 364, and cysteine 414–cysteine 422. The residue at position 285 (threonine 285) is a Phosphothreonine. The Zn(2+) site is built by aspartate 465 and histidine 466.

The protein belongs to the phosphoethanolamine transferase family. Monomer. Phosphorylated at Thr-285; may represent an intermediate in the catalytic mechanism.

The protein localises to the cell inner membrane. The catalysed reaction is lipid A (E. coli) + a 1,2-diacyl-sn-glycero-3-phosphoethanolamine + H(+) = lipid A 4'-(2-aminoethyl diphosphate) (E. coli) + a 1,2-diacyl-sn-glycerol. With respect to regulation, EDTA may inhibit activity. May be inhibited by ethanolamine. In terms of biological role, probably catalyzes the addition of a phosphoethanolamine moiety to lipid A. Phosphoethanolamine modification of lipid A confers polymyxin resistance. Confers resistance to polymyxin-type antibiotics such as colistin; in the E.coli strain W3110. This is Phosphatidylethanolamine transferase Mcr-1 (mcr1) from Escherichia coli.